A 393-amino-acid chain; its full sequence is Erythronate-4-phosphate dehydrogenase (393 aa).

Substrate contacts are provided by Ser-57 and Thr-79. Residue Asp-159 participates in NAD(+) binding. Arg-229 is a catalytic residue. Asp-253 contributes to the NAD(+) binding site. Residue Glu-258 is part of the active site. His-275 (proton donor) is an active-site residue. An NAD(+)-binding site is contributed by Gly-278. Residue Tyr-279 participates in substrate binding.

It belongs to the D-isomer specific 2-hydroxyacid dehydrogenase family. PdxB subfamily. In terms of assembly, homodimer.

It is found in the cytoplasm. The enzyme catalyses 4-phospho-D-erythronate + NAD(+) = (R)-3-hydroxy-2-oxo-4-phosphooxybutanoate + NADH + H(+). It functions in the pathway cofactor biosynthesis; pyridoxine 5'-phosphate biosynthesis; pyridoxine 5'-phosphate from D-erythrose 4-phosphate: step 2/5. Functionally, catalyzes the oxidation of erythronate-4-phosphate to 3-hydroxy-2-oxo-4-phosphonooxybutanoate. This is Erythronate-4-phosphate dehydrogenase from Colwellia psychrerythraea (strain 34H / ATCC BAA-681) (Vibrio psychroerythus).